Here is a 388-residue protein sequence, read N- to C-terminus: Alcohol dehydrogenase patD (388 aa).

Residue Cys46 participates in Zn(2+) binding. His47 serves as a coordination point for NAD(+). Zn(2+) is bound by residues His67, Glu68, Cys101, Cys104, and Cys112. His67 serves as a coordination point for substrate. Residues 198–203 (VALSRG), 295–297 (SLL), and 320–322 (EEA) contribute to the NAD(+) site.

Belongs to the zinc-containing alcohol dehydrogenase family. Zn(2+) serves as cofactor.

It is found in the cytoplasm. Its subcellular location is the cytosol. It carries out the reaction neopatulin + NADPH + H(+) = (E)-ascladiol + NADP(+). It functions in the pathway mycotoxin biosynthesis; patulin biosynthesis. In terms of biological role, alcohol dehydrogenase; part of the gene cluster that mediates the biosynthesis of patulin, an acetate-derived tetraketide mycotoxin produced by several fungal species that shows antimicrobial properties against several bacteria. PatD catalyzes the conversion of neopatulin into E-ascladiol. The pathway begins with the synthesis of 6-methylsalicylic acid by the polyketide synthase (PKS) patK via condensation of acetate and malonate units. The 6-methylsalicylic acid decarboxylase patG then catalyzes the decarboxylation of 6-methylsalicylic acid to yield m-cresol (also known as 3-methylphenol). These first reactions occur in the cytosol. The intermediate m-cresol is then transported into the endoplasmic reticulum where the cytochrome P450 monooxygenase patH converts it to m-hydroxybenzyl alcohol, which is further converted to gentisyl alcohol by the cytochrome P450 monooxygenase patI. The oxidoreductases patJ and patO further convert gentisyl alcohol to isoepoxydon in the vacuole. PatN catalyzes then the transformation of isoepoxydon into phyllostine. The cluster protein patF is responsible for the conversion from phyllostine to neopatulin whereas the alcohol dehydrogenase patD converts neopatulin to E-ascladiol. The steps between isoepoxydon and E-ascladiol occur in the cytosol, and E-ascladiol is probably secreted to the extracellular space by one of the cluster-specific transporters patC or patM. Finally, the secreted patulin synthase patE catalyzes the conversion of E-ascladiol to patulin. This is Alcohol dehydrogenase patD from Aspergillus clavatus (strain ATCC 1007 / CBS 513.65 / DSM 816 / NCTC 3887 / NRRL 1 / QM 1276 / 107).